The sequence spans 72 residues: Translation initiation factor IF-1 (72 aa).

One can recognise an S1-like domain in the interval 1–72; it reads MAKEDCIEMQ…SKARIIFRAR (72 aa).

The protein belongs to the IF-1 family. Component of the 30S ribosomal translation pre-initiation complex which assembles on the 30S ribosome in the order IF-2 and IF-3, IF-1 and N-formylmethionyl-tRNA(fMet); mRNA recruitment can occur at any time during PIC assembly.

The protein localises to the cytoplasm. Its function is as follows. One of the essential components for the initiation of protein synthesis. Stabilizes the binding of IF-2 and IF-3 on the 30S subunit to which N-formylmethionyl-tRNA(fMet) subsequently binds. Helps modulate mRNA selection, yielding the 30S pre-initiation complex (PIC). Upon addition of the 50S ribosomal subunit IF-1, IF-2 and IF-3 are released leaving the mature 70S translation initiation complex. This chain is Translation initiation factor IF-1, found in Haemophilus ducreyi (strain 35000HP / ATCC 700724).